We begin with the raw amino-acid sequence, 368 residues long: E3 ubiquitin-protein ligase E3D (368 aa).

An N-acetylalanine modification is found at Ala2. Positions 129–159 (PLPSENWSALVGEWCCHPDPFANRPLHPREN) match the BRAT1-like motif motif. Position 144 (Cys144) interacts with Zn(2+). Positions 214-236 (RPSEGSFPNIPRSQFLQSIIAQC) are interaction with UBE2C. The segment at 332–368 (LPSATCLELLLILSRNNASLPLSLRQMNSFQVAFLKM) is HECT-like.

Interacts with UBE2C/UbcH10 (E2 ubiquitin-conjugating enzyme). In vitro, interacts with cyclin-B. In terms of processing, ubiquitinated by UBCH10 (E2 ubiquitin-conjugating enzyme).

It localises to the cytoplasm. It carries out the reaction S-ubiquitinyl-[E2 ubiquitin-conjugating enzyme]-L-cysteine + [acceptor protein]-L-lysine = [E2 ubiquitin-conjugating enzyme]-L-cysteine + N(6)-ubiquitinyl-[acceptor protein]-L-lysine.. The protein operates within protein modification; protein ubiquitination. Its function is as follows. E3 ubiquitin-protein ligase which accepts ubiquitin from specific E2 ubiquitin-conjugating enzymes, and transfers it to substrates, generally promoting their degradation by the proteasome. Independently of its E3 ubiquitin-protein ligase activity, acts as an inhibitor of CPSF3 endonuclease activity by blocking CPSF3 active site. The polypeptide is E3 ubiquitin-protein ligase E3D (Ube3d) (Mus musculus (Mouse)).